The following is a 254-amino-acid chain: 4-hydroxy-tetrahydrodipicolinate reductase (254 aa).

NAD(+) is bound by residues 8-13, D35, 86-88, and 110-113; these read GCSGKM, CST, and SANM. The active-site Proton donor/acceptor is the H143. H144 is a (S)-2,3,4,5-tetrahydrodipicolinate binding site. K147 functions as the Proton donor in the catalytic mechanism. 153–154 contributes to the (S)-2,3,4,5-tetrahydrodipicolinate binding site; sequence GT.

This sequence belongs to the DapB family.

The protein localises to the cytoplasm. The catalysed reaction is (S)-2,3,4,5-tetrahydrodipicolinate + NAD(+) + H2O = (2S,4S)-4-hydroxy-2,3,4,5-tetrahydrodipicolinate + NADH + H(+). It catalyses the reaction (S)-2,3,4,5-tetrahydrodipicolinate + NADP(+) + H2O = (2S,4S)-4-hydroxy-2,3,4,5-tetrahydrodipicolinate + NADPH + H(+). Its pathway is amino-acid biosynthesis; L-lysine biosynthesis via DAP pathway; (S)-tetrahydrodipicolinate from L-aspartate: step 4/4. Functionally, catalyzes the conversion of 4-hydroxy-tetrahydrodipicolinate (HTPA) to tetrahydrodipicolinate. The polypeptide is 4-hydroxy-tetrahydrodipicolinate reductase (Clostridium perfringens (strain 13 / Type A)).